Here is a 383-residue protein sequence, read N- to C-terminus: S-(hydroxymethyl)glutathione dehydrogenase (383 aa).

Zn(2+) is bound at residue cysteine 51. Histidine 52 contributes to the NAD(+) binding site. Residues histidine 73, glutamate 74, cysteine 103, cysteine 106, cysteine 109, cysteine 117, and cysteine 180 each contribute to the Zn(2+) site. NAD(+) is bound by residues 205 to 210 (GAGCVG), aspartate 229, and 298 to 300 (IGV).

This sequence belongs to the zinc-containing alcohol dehydrogenase family. Class-III subfamily. Requires Zn(2+) as cofactor.

It catalyses the reaction a primary alcohol + NAD(+) = an aldehyde + NADH + H(+). The catalysed reaction is a secondary alcohol + NAD(+) = a ketone + NADH + H(+). The enzyme catalyses S-(hydroxymethyl)glutathione + NADP(+) = S-formylglutathione + NADPH + H(+). It carries out the reaction S-(hydroxymethyl)glutathione + NAD(+) = S-formylglutathione + NADH + H(+). It catalyses the reaction S-nitrosoglutathione + NADH + H(+) = S-(hydroxysulfenamide)glutathione + NAD(+). Its function is as follows. Oxidizes long-chain alcohols and, in the presence of glutathione, is able to oxidize formaldehyde. Also acts as a S-nitroso-glutathione reductase by catalyzing the NADH-dependent reduction of S-nitrosoglutathione, thereby regulating protein S-nitrosylation. The sequence is that of S-(hydroxymethyl)glutathione dehydrogenase (FDH1) from Aspergillus oryzae (strain ATCC 42149 / RIB 40) (Yellow koji mold).